Here is a 142-residue protein sequence, read N- to C-terminus: Large ribosomal subunit protein uL11 (142 aa).

It belongs to the universal ribosomal protein uL11 family. In terms of assembly, part of the ribosomal stalk of the 50S ribosomal subunit. Interacts with L10 and the large rRNA to form the base of the stalk. L10 forms an elongated spine to which L12 dimers bind in a sequential fashion forming a multimeric L10(L12)X complex. One or more lysine residues are methylated.

Forms part of the ribosomal stalk which helps the ribosome interact with GTP-bound translation factors. In Pseudoalteromonas atlantica (strain T6c / ATCC BAA-1087), this protein is Large ribosomal subunit protein uL11.